Reading from the N-terminus, the 212-residue chain is Dephospho-CoA kinase (212 aa).

The region spanning 4-204 is the DPCK domain; sequence IVALTGGICS…RDYLKAEKTT (201 aa). 12–17 is a binding site for ATP; the sequence is CSGKSV.

It belongs to the CoaE family.

It localises to the cytoplasm. The enzyme catalyses 3'-dephospho-CoA + ATP = ADP + CoA + H(+). The protein operates within cofactor biosynthesis; coenzyme A biosynthesis; CoA from (R)-pantothenate: step 5/5. Catalyzes the phosphorylation of the 3'-hydroxyl group of dephosphocoenzyme A to form coenzyme A. The polypeptide is Dephospho-CoA kinase (Blochmanniella pennsylvanica (strain BPEN)).